The chain runs to 266 residues: HLA class II histocompatibility antigen, DR beta 4 chain (266 aa).

The N-terminal stretch at 1-29 (MVCLKLPGGSCMAALTVTLTVLSSPLALA) is a signal peptide. Residues 30–124 (GDTQPRFLEQ…VESFTVQRRV (95 aa)) form a beta-1 region. The Extracellular portion of the chain corresponds to 30-227 (GDTQPRFLEQ…SARSESAQSK (198 aa)). Disulfide bonds link C44–C108 and C146–C202. The N-linked (GlcNAc...) asparagine glycan is linked to N48. The beta-2 stretch occupies residues 125-227 (QPKVTVYPSK…SARSESAQSK (103 aa)). The region spanning 126-216 (PKVTVYPSKT…PSMMSPLTVQ (91 aa)) is the Ig-like C1-type domain. A helical membrane pass occupies residues 228–250 (MLSGVGGFVLGLLFLGTGLFIYF). Topologically, residues 251-266 (RNQKGHSGLQPTGLLS) are cytoplasmic. K254 is covalently cross-linked (Glycyl lysine isopeptide (Lys-Gly) (interchain with G-Cter in ubiquitin)).

The protein belongs to the MHC class II family. In terms of assembly, heterodimer of an alpha and a beta subunit; also referred as MHC class II molecule. In the endoplasmic reticulum (ER) it forms a heterononamer; 3 MHC class II molecules bind to a CD74 homotrimer (also known as invariant chain or HLA class II histocompatibility antigen gamma chain). In the endosomal/lysosomal system; CD74 undergoes sequential degradation by various proteases; leaving a small fragment termed CLIP on each MHC class II molecule. MHC class II molecule interacts with HLA_DM, and HLA_DO in B-cells, in order to release CLIP and facilitate the binding of antigenic peptides. Ubiquitinated by MARCH1 and MARCH8 at Lys-254 leading to sorting into the endosome system and down-regulation of MHC class II. When associated with ubiquitination of the alpha subunit of HLA-DR: HLA-DRA 'Lys-244', the down-regulation of MHC class II may be highly effective.

Its subcellular location is the cell membrane. The protein localises to the endoplasmic reticulum membrane. It is found in the golgi apparatus. The protein resides in the trans-Golgi network membrane. It localises to the endosome membrane. Its subcellular location is the lysosome membrane. The protein localises to the late endosome membrane. Its function is as follows. Binds peptides derived from antigens that access the endocytic route of antigen presenting cells (APC) and presents them on the cell surface for recognition by the CD4 T-cells. The peptide binding cleft accommodates peptides of 10-30 residues. The peptides presented by MHC class II molecules are generated mostly by degradation of proteins that access the endocytic route, where they are processed by lysosomal proteases and other hydrolases. Exogenous antigens that have been endocytosed by the APC are thus readily available for presentation via MHC II molecules, and for this reason this antigen presentation pathway is usually referred to as exogenous. As membrane proteins on their way to degradation in lysosomes as part of their normal turn-over are also contained in the endosomal/lysosomal compartments, exogenous antigens must compete with those derived from endogenous components. Autophagy is also a source of endogenous peptides, autophagosomes constitutively fuse with MHC class II loading compartments. In addition to APCs, other cells of the gastrointestinal tract, such as epithelial cells, express MHC class II molecules and CD74 and act as APCs, which is an unusual trait of the GI tract. To produce a MHC class II molecule that presents an antigen, three MHC class II molecules (heterodimers of an alpha and a beta chain) associate with a CD74 trimer in the ER to form a heterononamer. Soon after the entry of this complex into the endosomal/lysosomal system where antigen processing occurs, CD74 undergoes a sequential degradation by various proteases, including CTSS and CTSL, leaving a small fragment termed CLIP (class-II-associated invariant chain peptide). The removal of CLIP is facilitated by HLA-DM via direct binding to the alpha-beta-CLIP complex so that CLIP is released. HLA-DM stabilizes MHC class II molecules until primary high affinity antigenic peptides are bound. The MHC II molecule bound to a peptide is then transported to the cell membrane surface. In B-cells, the interaction between HLA-DM and MHC class II molecules is regulated by HLA-DO. Primary dendritic cells (DCs) also to express HLA-DO. Lysosomal microenvironment has been implicated in the regulation of antigen loading into MHC II molecules, increased acidification produces increased proteolysis and efficient peptide loading. The polypeptide is HLA class II histocompatibility antigen, DR beta 4 chain (HLA-DRB4) (Homo sapiens (Human)).